The following is a 444-amino-acid chain: CCA-adding enzyme (444 aa).

The ATP site is built by serine 57 and arginine 60. CTP-binding residues include serine 57 and arginine 60. Mg(2+) contacts are provided by aspartate 69, aspartate 71, and aspartate 124. Positions 147, 168, and 177 each coordinate ATP. CTP-binding residues include histidine 147, lysine 168, and tyrosine 177.

Belongs to the tRNA nucleotidyltransferase/poly(A) polymerase family. Archaeal CCA-adding enzyme subfamily. In terms of assembly, homodimer. Mg(2+) serves as cofactor.

The catalysed reaction is a tRNA precursor + 2 CTP + ATP = a tRNA with a 3' CCA end + 3 diphosphate. It carries out the reaction a tRNA with a 3' CCA end + 2 CTP + ATP = a tRNA with a 3' CCACCA end + 3 diphosphate. In terms of biological role, catalyzes the addition and repair of the essential 3'-terminal CCA sequence in tRNAs without using a nucleic acid template. Adds these three nucleotides in the order of C, C, and A to the tRNA nucleotide-73, using CTP and ATP as substrates and producing inorganic pyrophosphate. tRNA 3'-terminal CCA addition is required both for tRNA processing and repair. Also involved in tRNA surveillance by mediating tandem CCA addition to generate a CCACCA at the 3' terminus of unstable tRNAs. While stable tRNAs receive only 3'-terminal CCA, unstable tRNAs are marked with CCACCA and rapidly degraded. The polypeptide is CCA-adding enzyme (Methanococcus maripaludis (strain DSM 14266 / JCM 13030 / NBRC 101832 / S2 / LL)).